Here is a 437-residue protein sequence, read N- to C-terminus: MSSLSIPRQSLYYVNKVTEGRSVSNVQVVSPCQKQGQTYVTAFTPLTSNVQVHTSLEQLSTIRNADVLIFNNALSQIITNADLLTDFLKNATNATAIGGTVIIREDLKDCSDKRQVARLTDYFDVFRTTDSDGNNTGLDLYTVDQVEHSNYVEQNFLDFIFVFRKKVFAPTTDATITFRDFLDKTQYTNTGIDAYEWMFGVNFISPGGYDENLKIIKRFGDFKPGQTMLDIGVGIGGGARQVADEFGVHVHGIDLSSNMLAIALERLHEEKDSRVKYSITDALVYQFEDNSFDYVFSRDCIQHIPDTEKLFSRIYKALKPGGKVLITMYGKGYGEQSDKFKTYVAQRAYFLKNLKEIADIANKTGFVNVQTENMTPRFKEILLEERGHLEQNEAEFMSKFTQRERDSLISGWTDKLGYIEKDNHNWNFFLAQKPFPK.

Residues 186-187 and tyrosine 195 contribute to the N-methylethanolamine phosphate site; that span reads QY. S-adenosyl-L-homocysteine contacts are provided by residues 204–205, glycine 232, aspartate 254, 281–282, and arginine 298; these read IS and DA. N-methylethanolamine phosphate contacts are provided by residues tyrosine 329, tyrosine 343, 347–349, and lysine 415; that span reads RAY.

The protein belongs to the class I-like SAM-binding methyltransferase superfamily.

It catalyses the reaction N-methylethanolamine phosphate + S-adenosyl-L-methionine = N,N-dimethylethanolamine phosphate + S-adenosyl-L-homocysteine + H(+). It carries out the reaction N,N-dimethylethanolamine phosphate + S-adenosyl-L-methionine = phosphocholine + S-adenosyl-L-homocysteine + H(+). It functions in the pathway phospholipid metabolism; phosphatidylcholine biosynthesis; phosphocholine from phosphoethanolamine. Its activity is regulated as follows. Feedback inhibition by phosphatidylcholine and also by S-adenosylhomocysteine. In terms of biological role, catalyzes the last two methylation reactions in the synthesis of phosphocholine, by converting phospho-monomethylethanolamine (N-methylethanolamine phosphate) into phospho-dimethylethanolamine (N,N-dimethylethanolamine phosphate) and the latter into phosphocholine. Phosphocholine is a precursor for phosphatidylcholine, a major component in membranes and a precursor itself in the production of glycoconjugates secreted by parasitic nematodes to avoid host immune responses. In Caenorhabditis elegans, this protein is Phosphoethanolamine N-methyltransferase 2.